A 295-amino-acid chain; its full sequence is Indole-3-glycerol phosphate synthase (295 aa).

It belongs to the TrpC family.

The enzyme catalyses 1-(2-carboxyphenylamino)-1-deoxy-D-ribulose 5-phosphate + H(+) = (1S,2R)-1-C-(indol-3-yl)glycerol 3-phosphate + CO2 + H2O. Its pathway is amino-acid biosynthesis; L-tryptophan biosynthesis; L-tryptophan from chorismate: step 4/5. In Prochlorococcus marinus (strain NATL2A), this protein is Indole-3-glycerol phosphate synthase.